A 104-amino-acid chain; its full sequence is Large ribosomal subunit protein uL23 (104 aa).

Belongs to the universal ribosomal protein uL23 family. In terms of assembly, part of the 50S ribosomal subunit. Contacts protein L29, and trigger factor when it is bound to the ribosome.

Its function is as follows. One of the early assembly proteins it binds 23S rRNA. One of the proteins that surrounds the polypeptide exit tunnel on the outside of the ribosome. Forms the main docking site for trigger factor binding to the ribosome. The sequence is that of Large ribosomal subunit protein uL23 from Rhodospirillum rubrum (strain ATCC 11170 / ATH 1.1.1 / DSM 467 / LMG 4362 / NCIMB 8255 / S1).